The following is a 391-amino-acid chain: Processive diacylglycerol beta-glucosyltransferase (391 aa).

The protein belongs to the glycosyltransferase 28 family. UgtP subfamily.

It is found in the cell membrane. It catalyses the reaction a 1,2-diacyl-3-O-(beta-D-glucopyranosyl)-sn-glycerol + UDP-alpha-D-glucose = a 1,2-diacyl-3-O-(beta-D-Glc-(1-&gt;6)-beta-D-Glc)-sn-glycerol + UDP + H(+). The enzyme catalyses a 1,2-diacyl-sn-glycerol + UDP-alpha-D-glucose = a 1,2-diacyl-3-O-(beta-D-glucopyranosyl)-sn-glycerol + UDP + H(+). Its pathway is glycolipid metabolism; diglucosyl-diacylglycerol biosynthesis. In terms of biological role, processive glucosyltransferase involved in the biosynthesis of both the bilayer- and non-bilayer-forming membrane glucolipids. Is able to successively transfer two glucosyl residues to diacylglycerol (DAG), thereby catalyzing the formation of beta-monoglucosyl-DAG (3-O-(beta-D-glucopyranosyl)-1,2-diacyl-sn-glycerol) and beta-diglucosyl-DAG (3-O-(beta-D-glucopyranosyl-beta-(1-&gt;6)-D-glucopyranosyl)-1,2-diacyl-sn-glycerol). Beta-diglucosyl-DAG is the predominant glycolipid found in Bacillales and is also used as a membrane anchor for lipoteichoic acid (LTA). The chain is Processive diacylglycerol beta-glucosyltransferase from Staphylococcus aureus (strain Mu3 / ATCC 700698).